A 718-amino-acid polypeptide reads, in one-letter code: Catalase-peroxidase (718 aa).

The segment at residues 92–220 (WHAAGTYRTA…LASVMMGLIY (129 aa)) is a cross-link (tryptophyl-tyrosyl-methioninium (Trp-Tyr) (with M-246)). Histidine 93 functions as the Proton acceptor in the catalytic mechanism. Positions 220-246 (YVNPEGVDGHPDPLKTANDVRVTFERM) form a cross-link, tryptophyl-tyrosyl-methioninium (Tyr-Met) (with W-92). Heme b is bound at residue histidine 261.

The protein belongs to the peroxidase family. Peroxidase/catalase subfamily. As to quaternary structure, homodimer or homotetramer. Heme b is required as a cofactor. In terms of processing, formation of the three residue Trp-Tyr-Met cross-link is important for the catalase, but not the peroxidase activity of the enzyme.

It carries out the reaction H2O2 + AH2 = A + 2 H2O. The enzyme catalyses 2 H2O2 = O2 + 2 H2O. Its function is as follows. Bifunctional enzyme with both catalase and broad-spectrum peroxidase activity. The protein is Catalase-peroxidase of Shewanella halifaxensis (strain HAW-EB4).